Consider the following 820-residue polypeptide: Chitinase A (820 aa).

The first 21 residues, 1–21 (MKLNKITSYIGFALLSGGALA), serve as a signal peptide directing secretion. Residues 158–588 (RVTGAYFVEW…NAMYDGLTAG (431 aa)) enclose the GH18 domain. Glu313 serves as the catalytic Proton donor.

It belongs to the glycosyl hydrolase 18 family. Chitinase class II subfamily.

The catalysed reaction is Random endo-hydrolysis of N-acetyl-beta-D-glucosaminide (1-&gt;4)-beta-linkages in chitin and chitodextrins.. With respect to regulation, stimulated by magnesium ions; inhibited by N-bromosuccinimide and 2-hydroxy-5-nitrobenzyl bromide. This is Chitinase A (chiA) from Pseudoalteromonas piscicida.